Here is a 749-residue protein sequence, read N- to C-terminus: RNA-binding protein 5-B (749 aa).

The tract at residues 1–88 is disordered; the sequence is MGSDKRVSRS…YHSDGDYMDH (88 aa). The RRM 1 domain occupies 102–182; it reads KTIMLRGLPI…KTIAMHYSNP (81 aa). The RanBP2-type zinc-finger motif lies at 185–214; it reads KFEDWLCNKCGLYNFRRRLKCFRCGAAKAE. An RRM 2 domain is found at 241 to 325; sequence SAIILRNIGP…KTIGVDFAKS (85 aa). 4 disordered regions span residues 425–471, 520–558, 570–595, and 626–680; these read QMYQ…SVPD, PAAD…AQQI, NKQK…ESAA, and TEEE…NSNI. Positions 429–460 are enriched in low complexity; sequence QPGSPTQSGTSTAASTTPASTTSTEEATTPTA. Composition is skewed to basic and acidic residues over residues 585-594 and 627-648; these read SRDEERKESA and EEEK…EKYG. The G-patch domain maps to 677 to 723; the sequence is NSNIGNKMLQAMGWKEGSGLGRKSQGITAPIQAQVRMRGAGLGAKGS.

The protein belongs to the RBM5/RBM10 family. Component of the spliceosome A complex (also known as the prespliceosome). Appears to dissociate from the spliceosome upon formation of the spliceosome B complex (also known as the precatalytic spliceosome), in which the heterotrimeric U4/U6.U5 snRNPs are bound.

Its subcellular location is the nucleus. Its function is as follows. Component of the spliceosome A complex. Regulates alternative splicing of a number of mRNAs. May modulate splice site pairing after recruitment of the U1 and U2 snRNPs to the 5' and 3' splice sites of the intron. The protein is RNA-binding protein 5-B (rbm5-b) of Xenopus laevis (African clawed frog).